Consider the following 369-residue polypeptide: MAHCTEYMNAPKKLPADVAEELATTAQKLVQAGKGILAADESTQTIKKRFDNIKLENTIENRASYRDLLFGTKGLGKFISGAILFEETLFQKNEAGVPMVNLLHNENIIPGIKVDKGLVNIPCTDEEKSTQGLDGLAERCKEYYKAGARFAKWRTVLVIDTAKGKPTDLSIHETAWGLARYASICQQNRLVPIVEPEILADGPHSIEVCAVVTQKVLSCVFKALQENGVLLEGALLKPNMVTAGYECTAKTTTQDVGFLTVRTLRRTVPPALPGVVFLSGGQSEEEASVNLNSINALGPHPWALTFSYGRALQASVLNTWQGKKENVAKAREVLLQRAEANSLATYGKYKGGAGGENAGASLYEKKYVY.

Position 40 (Asp40) interacts with dihydroxyacetone phosphate. 2 residues coordinate D-glyceraldehyde 3-phosphate: Ser42 and Thr45. Residue Arg49 coordinates beta-D-fructose 1,6-bisphosphate. Lys113 serves as a coordination point for D-glyceraldehyde 3-phosphate. Lys152 is a dihydroxyacetone phosphate binding site. Glu195 is a D-glyceraldehyde 3-phosphate binding site. The active-site Proton acceptor is Glu195. 3 residues coordinate dihydroxyacetone phosphate: Lys237, Ser279, and Gly280. Lys237 serves as the catalytic Schiff-base intermediate with dihydroxyacetone phosphate. Residues 279 to 281 (SGG) and Ser307 each bind beta-D-fructose 1,6-bisphosphate. Dihydroxyacetone phosphate-binding residues include Gly309 and Arg310. Position 310 (Arg310) interacts with beta-D-fructose 1,6-bisphosphate.

The protein belongs to the class I fructose-bisphosphate aldolase family. Homotetramer. Interacts with TRAP (via cytoplasmic domain); the interaction prevents substrate binding and thereby inhibits aldolase activity. Interacts with MTRAP (via cytoplasmic domain); MTRAP phosphorylation may increase the binding to FBPA. Interact with RH1 (via cytoplasmic domain). Interacts with RH2b (via cytoplasmic domain). Interacts with RH4 (via cytoplasmic domain). Interacts with AMA1 (via cytoplasmic domain); the interaction is weak, however it may be increased upon AMA1 phosphorylation. Interacts with EBA140 (via cytoplasmic domain); the interaction is weak. Interacts with EBA175 (via cytoplasmic domain); the interaction is weak. Interacts with EBA181 (via cytoplasmic domain); the interaction is weak. Interacts with G-actin and F-actin. May interact with ACT2/actin II; the interaction inhibits FBPA catalytic activity. Interacts with human SLC4A1/band 3 (via N-terminus); the interaction inhibits FBPA catalytic activity.

It is found in the cytoplasm. Its subcellular location is the membrane. The protein localises to the host cell membrane. The catalysed reaction is beta-D-fructose 1,6-bisphosphate = D-glyceraldehyde 3-phosphate + dihydroxyacetone phosphate. It functions in the pathway carbohydrate degradation; glycolysis; D-glyceraldehyde 3-phosphate and glycerone phosphate from D-glucose: step 4/4. The cytoplasmic tail of TRAP and probably other adhesins acts as a competitive inhibitor as the binding sites of the glycolytic substrate fructose 1,6-bisphosphate and TRAP partially overlap. Functionally, plays a key role in glycolysis by catalyzing the cleavage of fructose 1,6-bisphosphate into dihydroxyacetone phosphate and glyceraldehyde 3-phosphate. Independently of its catalytic activity, connects the actin filaments, and thus the actomyosin motor, to cell surface adhesins of the thrombospondin-related anonymous protein (TRAP), the erythrocyte binding ligand (EBL) and reticulocyte binding homolog (RH) protein families; this interaction is probably involved in transducing the motor force across the parasite surface required for sporozoite and ookinete gliding motility and merozoite invasion. Stimulates actin polymerisation. The protein is Fructose-bisphosphate aldolase of Plasmodium falciparum (isolate 3D7).